The sequence spans 969 residues: Defective in germ line development protein 3 (969 aa).

A gld-2-binding region spans residues 34 to 81 (MAENAASARKLFVSSALKDIIVNPENFYHDFQQSAQMAEDANQRRQVS). KH domains lie at 34–109 (MAEN…MIEI), 113–187 (RVTL…MRRN), 189–259 (HFTV…NEIL), 270–342 (FTLH…IMDL), and 344–419 (PISM…YQKV). The tract at residues 57-471 (PENFYHDFQQ…GSNGRRHRSS (415 aa)) is gls-1-binding. Disordered regions lie at residues 459-508 (LSDG…SFSE) and 602-711 (EQHR…GDIH). Over residues 487 to 508 (KQFSESSGGPSRSHTRVSSFSE) the composition is skewed to polar residues. A compositionally biased stretch (low complexity) spans 631 to 644 (PSSSTGSYYPSTTP). Residues 647-659 (RVYEQVREDDLRS) are compositionally biased toward basic and acidic residues. Residues 664–676 (RRTSVNGDDQNVE) show a composition bias toward polar residues. 2 stretches are compositionally biased toward basic and acidic residues: residues 677–687 (SMHDQGYERQY) and 694–711 (LQKD…GDIH). Positions 769-969 (LYMHESPHND…DLSLDETSTY (201 aa)) are gls-1-binding. The interval 860–949 (NGVTKTILEP…VLNEKEKEIA (90 aa)) is fbf-1-binding. Positions 950–969 (DKSIESTVTQDLSLDETSTY) are disordered. Over residues 954 to 969 (ESTVTQDLSLDETSTY) the composition is skewed to polar residues.

Interacts (via its KH1 domain) with gld-2. Isoform A but not isoform B interacts specifically with fbf-1 and fbf-2 in an RNA-independent manner. Isoform A interacts with gls-1 isoform C. As to expression, expressed in the germline (at protein level). In adult hermaphrodites, first detected in the transition zone (TZ), weakly expressed in the early mitotic region and in pachytene germ cells, and becomes more abundantly expressed as germ cells enter diakinesis (at protein level). Expressed in primary spermatocytes, but not in secondary spermatocytes or adult sperm (at protein level).

The protein resides in the cytoplasm. It is found in the cytoplasmic granule. Its subcellular location is the perinuclear region. Required maternally for germline survival and embryogenesis. Forms a complex with gls-1 which promotes the oogenic cell fate by freeing the translational repressor fbf to repress sperm promoting factors. Promotes maturation of primary spermatocytes to mature sperm. Required during hermaphrodite development to promote sperm fate, which is critical for determining the normal number of sperm. Promotion of sperm fate is at the expense of oogenesis, possibly through the negative regulation of fbf. Required during male development for the continued production of sperm and inhibition of oogenesis. Together with gld-2, promotes the transition from mitosis to meiosis. Required for polyadenylation of neg-1 mRNA during embryogenesis. In Caenorhabditis elegans, this protein is Defective in germ line development protein 3.